Reading from the N-terminus, the 149-residue chain is Nucleoside diphosphate kinase 1 (149 aa).

Residues Lys9, Phe57, Arg85, Thr91, Arg102, and Asn112 each contribute to the ATP site. Residue His115 is the Pros-phosphohistidine intermediate of the active site.

Belongs to the NDK family. Homohexamer. Requires Mg(2+) as cofactor.

It catalyses the reaction a 2'-deoxyribonucleoside 5'-diphosphate + ATP = a 2'-deoxyribonucleoside 5'-triphosphate + ADP. It carries out the reaction a ribonucleoside 5'-diphosphate + ATP = a ribonucleoside 5'-triphosphate + ADP. Major role in the synthesis of nucleoside triphosphates other than ATP. The ATP gamma phosphate is transferred to the NDP beta phosphate via a ping-pong mechanism, using a phosphorylated active-site intermediate. This NDK is microtubule-associated. The protein is Nucleoside diphosphate kinase 1 (NDKR) of Oryza sativa subsp. japonica (Rice).